The sequence spans 334 residues: Zinc-finger homeodomain protein 10 (334 aa).

Residues 1 to 15 are compositionally biased toward low complexity; that stretch reads MMDMTPTITTTTTPT. Disordered stretches follow at residues 1–33 and 103–164; these read MMDM…QPAK and FHRR…LLSL. The ZF-HD dimerization-type; degenerate zinc-finger motif lies at 56-107; sequence YKECLKNHAAALGGHALDGCGEFMPSPSSISSDPTSLKCAACGCHRNFHRRD. Pro residues predominate over residues 136-155; the sequence is PPPPPPPPPRSPNSASPPPI. The homeobox DNA-binding region spans 200-263; it reads RKRFRTKFSQ…NNKNTFNRRD (64 aa). A disordered region spans residues 292–334; that stretch reads NGHHGVGGGGELHQSVSSGGGGGGFDSDSGGANGGNVNGSSSS. A compositionally biased stretch (gly residues) spans 309–328; sequence SGGGGGGFDSDSGGANGGNV.

In terms of assembly, homo- and heterodimer with other ZFHD proteins. Interacts with MIF1, MIF2 and MIF3; these interactions prevent nuclear localization and DNA-binding to inhibit transcription regulation activity. Binds to ZHD1, ZHD2, ZHD4, ZHD5, ZHD6, ZHD7 and ZHD8. Interacts with KIN10 and KIN11. In terms of tissue distribution, mostly expressed in rosettes (e.g. young leaves), flowers (e.g. styles), siliques and inflorescence.

The protein localises to the nucleus. Putative transcription factor. Probably involved in establishing polarity during leaf development through the gibberellic acid (GA) signaling pathway. The protein is Zinc-finger homeodomain protein 10 (ZHD10) of Arabidopsis thaliana (Mouse-ear cress).